A 213-amino-acid chain; its full sequence is Thymidylate kinase (213 aa).

ATP is bound at residue 9 to 16; the sequence is GIEGCGKT.

This sequence belongs to the thymidylate kinase family.

It carries out the reaction dTMP + ATP = dTDP + ADP. Functionally, phosphorylation of dTMP to form dTDP in both de novo and salvage pathways of dTTP synthesis. The polypeptide is Thymidylate kinase (Geobacter sulfurreducens (strain ATCC 51573 / DSM 12127 / PCA)).